The sequence spans 573 residues: Isocitrate dehydrogenase kinase/phosphatase (573 aa).

ATP contacts are provided by residues 315 to 321 (APGIRGM) and Lys-336. Asp-371 is a catalytic residue.

It belongs to the AceK family.

Its subcellular location is the cytoplasm. The catalysed reaction is L-seryl-[isocitrate dehydrogenase] + ATP = O-phospho-L-seryl-[isocitrate dehydrogenase] + ADP + H(+). Functionally, bifunctional enzyme which can phosphorylate or dephosphorylate isocitrate dehydrogenase (IDH) on a specific serine residue. This is a regulatory mechanism which enables bacteria to bypass the Krebs cycle via the glyoxylate shunt in response to the source of carbon. When bacteria are grown on glucose, IDH is fully active and unphosphorylated, but when grown on acetate or ethanol, the activity of IDH declines drastically concomitant with its phosphorylation. In Enterobacter sp. (strain 638), this protein is Isocitrate dehydrogenase kinase/phosphatase.